The following is a 532-amino-acid chain: FRIGIDA-like protein 4b (532 aa).

This sequence belongs to the Frigida family. In terms of tissue distribution, expressed in leaves, shoot apex, flowers and during seed development.

This is FRIGIDA-like protein 4b (FRL4B) from Arabidopsis thaliana (Mouse-ear cress).